The primary structure comprises 147 residues: 3-hydroxyacyl-[acyl-carrier-protein] dehydratase FabZ (147 aa).

H50 is a catalytic residue.

This sequence belongs to the thioester dehydratase family. FabZ subfamily.

Its subcellular location is the cytoplasm. It catalyses the reaction a (3R)-hydroxyacyl-[ACP] = a (2E)-enoyl-[ACP] + H2O. Its function is as follows. Involved in unsaturated fatty acids biosynthesis. Catalyzes the dehydration of short chain beta-hydroxyacyl-ACPs and long chain saturated and unsaturated beta-hydroxyacyl-ACPs. This chain is 3-hydroxyacyl-[acyl-carrier-protein] dehydratase FabZ, found in Lactiplantibacillus plantarum (strain ATCC BAA-793 / NCIMB 8826 / WCFS1) (Lactobacillus plantarum).